The sequence spans 367 residues: Chorismate synthase (367 aa).

A disordered region spans residues 41–60 (FTHDLQRRASGKSRHTSARR). NADP(+) contacts are provided by Arg-48 and Arg-54. FMN-binding positions include 125–127 (RSS), 238–239 (NA), Gly-278, 293–297 (KPTSS), and Arg-319.

This sequence belongs to the chorismate synthase family. In terms of assembly, homotetramer. The cofactor is FMNH2.

The catalysed reaction is 5-O-(1-carboxyvinyl)-3-phosphoshikimate = chorismate + phosphate. Its pathway is metabolic intermediate biosynthesis; chorismate biosynthesis; chorismate from D-erythrose 4-phosphate and phosphoenolpyruvate: step 7/7. Its function is as follows. Catalyzes the anti-1,4-elimination of the C-3 phosphate and the C-6 proR hydrogen from 5-enolpyruvylshikimate-3-phosphate (EPSP) to yield chorismate, which is the branch point compound that serves as the starting substrate for the three terminal pathways of aromatic amino acid biosynthesis. This reaction introduces a second double bond into the aromatic ring system. This chain is Chorismate synthase, found in Xanthomonas axonopodis pv. citri (strain 306).